A 579-amino-acid chain; its full sequence is 6-deoxy-6-sulfo-D-gluconate dehydratase (579 aa).

Cysteine 59, cysteine 127, and cysteine 200 together coordinate [4Fe-4S] cluster.

This sequence belongs to the IlvD/Edd family. Homodimer. Requires [4Fe-4S] cluster as cofactor.

The enzyme catalyses 6-deoxy-6-sulfo-D-gluconate = 2-dehydro-3,6-dideoxy-6-sulfo-D-gluconate + H2O. Functionally, catalyzes the dehydration of 6-deoxy-6-sulfo-D-gluconate to 2-dehydro-3,6-dideoxy-6-sulfo-D-gluconate. Is involved in a degradation pathway of sulfoquinovose (SQ) that allows P.putida SQ1 to use SQ as the sole carbon and energy source for growth. This Pseudomonas putida (Arthrobacter siderocapsulatus) protein is 6-deoxy-6-sulfo-D-gluconate dehydratase.